A 394-amino-acid polypeptide reads, in one-letter code: Enoyl-CoA delta isomerase 2 (394 aa).

Residues 1-38 (MAMAYLAWRLARRSCPSSLQVTSFPVVQLHMNRTAMRA) constitute a mitochondrion transit peptide. An ACB domain is found at 39 to 124 (SQKDFENSMN…VSSLSPSLES (86 aa)). Position 51 is an N6-acetyllysine; alternate (lysine 51). N6-succinyllysine; alternate is present on lysine 51. Lysine 55 bears the N6-succinyllysine mark. Lysine 62 is modified (N6-acetyllysine; alternate). Lysine 62 bears the N6-succinyllysine; alternate mark. An acyl-CoA is bound at residue 66–70 (YALYK). 3 positions are modified to N6-succinyllysine: lysine 70, lysine 81, and lysine 90. Residue lysine 92 is modified to N6-acetyllysine; alternate. Position 92 is an N6-succinyllysine; alternate (lysine 92). Lysine 92 is a binding site for an acyl-CoA. Position 101 is a phosphoserine (serine 101). Tyrosine 111 serves as a coordination point for an acyl-CoA. The residue at position 119 (serine 119) is a Phosphoserine. The interval 151–322 (TKIMFNRPKK…AQGLVTEVFP (172 aa)) is ECH-like. Lysine 161 is modified (N6-succinyllysine). Residue 198–202 (SGNDL) coordinates substrate. Position 289 is an N6-succinyllysine (lysine 289). Residues 392 to 394 (SKL) carry the Microbody targeting signal motif.

This sequence in the C-terminal section; belongs to the enoyl-CoA hydratase/isomerase family. In terms of tissue distribution, abundant in heart, skeletal muscle and liver. Expressed in CD34(+) T-cells and CD34(+) bone marrow cells.

The protein localises to the mitochondrion. The protein resides in the peroxisome matrix. The catalysed reaction is a (3Z)-enoyl-CoA = a 4-saturated (2E)-enoyl-CoA. The enzyme catalyses (3Z)-octenoyl-CoA = (2E)-octenoyl-CoA. It carries out the reaction a (3E)-enoyl-CoA = a 4-saturated (2E)-enoyl-CoA. It catalyses the reaction (2E)-tetradecenoyl-CoA = (3Z)-tetradecenoyl-CoA. The catalysed reaction is (3E)-tetradecenoyl-CoA = (2E)-tetradecenoyl-CoA. The enzyme catalyses (3E)-octenoyl-CoA = (2E)-octenoyl-CoA. It carries out the reaction (3E)-nonenoyl-CoA = (2E)-nonenoyl-CoA. Its pathway is lipid metabolism; fatty acid beta-oxidation. Its function is as follows. Able to isomerize both 3-cis and 3-trans double bonds into the 2-trans form in a range of enoyl-CoA species. Has a preference for 3-trans substrates. In Homo sapiens (Human), this protein is Enoyl-CoA delta isomerase 2 (ECI2).